A 109-amino-acid chain; its full sequence is Oncomodulin-2 (109 aa).

2 EF-hand domains span residues 39–74 and 78–109; these read MSAS…FESG and LTES…MVHS. Residues aspartate 52, aspartate 54, serine 56, tyrosine 58, glutamate 63, aspartate 91, aspartate 93, aspartate 95, lysine 97, and glutamate 102 each coordinate Ca(2+).

This sequence belongs to the parvalbumin family.

In Homo sapiens (Human), this protein is Oncomodulin-2 (OCM2).